We begin with the raw amino-acid sequence, 514 residues long: MRKINVFDTSLRDGEQMPGIALTVKEKLEIARQLERLGVDIIEAGFPASSPGDFQAVKEIAETVKGSSITGLARAKKSDIDSAWEALKSSAEPRVHVFLATSPIHMEHKLKLTPDQVVERAVESVRYAAEKFPHVQFSAEDANRSEWPFLKRIIEAAIDAGASVINLPDTVGYRTPEEISKLFEFVTENVKNIDRAILSTHNHDDLGMGVANSLAAISAGAGQVECTINGIGERAGNAALEEIAVALQIRSDYYQAKTGLKLSELKRTSALVSRLTSMNVPGNKAVVGANAFAHESGIHQDGMLKNKETYEIITPELVGATSSLPLGKHSGRHAFKTKLNELGFSGSDEKLQTIFSAFKQLCDKKKEVTEDDLYALIADATDDQDSTAYELTALQVTYGMNHVPTATIRLKKQDDREIEEAGTGSGSVEAIYNTLAKMTGGNYSLADYRIQSVNGGEDALAEVHVRIQADDFEQSGRGVAHDVLEASAKAYLHAVNRVIARKHYAKREMAKVES.

Residues 4 to 266 (INVFDTSLRD…KTGLKLSELK (263 aa)) enclose the Pyruvate carboxyltransferase domain. Mn(2+)-binding residues include Asp-13, His-201, His-203, and Asn-237. Residues 390 to 514 (ELTALQVTYG…AKREMAKVES (125 aa)) are regulatory domain.

Belongs to the alpha-IPM synthase/homocitrate synthase family. LeuA type 1 subfamily. Homodimer. Mn(2+) is required as a cofactor.

It localises to the cytoplasm. It carries out the reaction 3-methyl-2-oxobutanoate + acetyl-CoA + H2O = (2S)-2-isopropylmalate + CoA + H(+). It functions in the pathway amino-acid biosynthesis; L-leucine biosynthesis; L-leucine from 3-methyl-2-oxobutanoate: step 1/4. Functionally, catalyzes the condensation of the acetyl group of acetyl-CoA with 3-methyl-2-oxobutanoate (2-ketoisovalerate) to form 3-carboxy-3-hydroxy-4-methylpentanoate (2-isopropylmalate). The sequence is that of 2-isopropylmalate synthase from Shouchella clausii (strain KSM-K16) (Alkalihalobacillus clausii).